The chain runs to 325 residues: Glutarate 2-hydroxylase (325 aa).

3 residues coordinate Fe cation: His160, Asp162, and His292.

Belongs to the glutarate hydroxylase family. As to quaternary structure, homotetramer. The cofactor is Fe(2+).

It catalyses the reaction glutarate + 2-oxoglutarate + O2 = (S)-2-hydroxyglutarate + succinate + CO2. It functions in the pathway amino-acid degradation. In terms of biological role, acts as an alpha-ketoglutarate-dependent dioxygenase catalyzing hydroxylation of glutarate (GA) to L-2-hydroxyglutarate (L2HG). Functions in a L-lysine degradation pathway that proceeds via cadaverine, glutarate and L-2-hydroxyglutarate. In Shigella boydii serotype 18 (strain CDC 3083-94 / BS512), this protein is Glutarate 2-hydroxylase.